The primary structure comprises 366 residues: Photosynthetic reaction center cytochrome c subunit (366 aa).

Positions 1–22 (MALAVRISTLTVAVTAAALLAG) are cleaved as a signal peptide. C23 carries N-palmitoyl cysteine lipidation. C23 carries the S-diacylglycerol cysteine lipid modification. Heme contacts are provided by M94, C107, C110, H111, M129, H143, C151, C154, H155, M238, C249, C252, H253, C309, C312, and H313.

As to quaternary structure, component of the photosynthetic reaction center composed of protein subunits L (PufL), M (PufM), H (PuhA) and cytochrome C (PufC). The reaction center interacts with light-harvesting antenna complex LH1. Binds 4 heme groups per subunit.

The protein resides in the cellular chromatophore membrane. Functionally, the reaction center of purple bacteria contains a tightly bound cytochrome molecule which re-reduces the photo oxidized primary electron donor. This chain is Photosynthetic reaction center cytochrome c subunit (pufC), found in Rubrivivax gelatinosus (strain NBRC 100245 / IL144).